A 1676-amino-acid chain; its full sequence is Protein TIC 214 (1676 aa).

6 consecutive transmembrane segments (helical) span residues Ala23–Pro43, Gly71–Ile91, Leu96–Phe116, Ala145–Met165, Val179–Leu199, and Ile226–Phe246.

The protein belongs to the TIC214 family. As to quaternary structure, part of the Tic complex.

It localises to the plastid. The protein localises to the chloroplast inner membrane. Involved in protein precursor import into chloroplasts. May be part of an intermediate translocation complex acting as a protein-conducting channel at the inner envelope. The chain is Protein TIC 214 from Zygnema circumcarinatum (Green alga).